The following is a 148-amino-acid chain: Putative nickel-responsive regulator (148 aa).

Positions 76, 87, 89, and 95 each coordinate Ni(2+).

The protein belongs to the transcriptional regulatory CopG/NikR family. Ni(2+) serves as cofactor.

Transcriptional regulator. The polypeptide is Putative nickel-responsive regulator (Rhodopseudomonas palustris (strain ATCC BAA-98 / CGA009)).